The primary structure comprises 327 residues: Thiamine thiazole synthase (327 aa).

Residues cysteine 86, 107-108 (EA), glycine 115, and valine 182 contribute to the substrate site. Position 216 is a 2,3-didehydroalanine (Cys) (cysteine 216). Residues aspartate 218, histidine 233, methionine 285, and 295–297 (RMG) each bind substrate.

This sequence belongs to the THI4 family. As to quaternary structure, homooctamer. Fe cation serves as cofactor. In terms of processing, during the catalytic reaction, a sulfide is transferred from Cys-216 to a reaction intermediate, generating a dehydroalanine residue.

Its subcellular location is the cytoplasm. It localises to the nucleus. The enzyme catalyses [ADP-thiazole synthase]-L-cysteine + glycine + NAD(+) = [ADP-thiazole synthase]-dehydroalanine + ADP-5-ethyl-4-methylthiazole-2-carboxylate + nicotinamide + 3 H2O + 2 H(+). Functionally, involved in biosynthesis of the thiamine precursor thiazole. Catalyzes the conversion of NAD and glycine to adenosine diphosphate 5-(2-hydroxyethyl)-4-methylthiazole-2-carboxylic acid (ADT), an adenylated thiazole intermediate. The reaction includes an iron-dependent sulfide transfer from a conserved cysteine residue of the protein to a thiazole intermediate. The enzyme can only undergo a single turnover, which suggests it is a suicide enzyme. May have additional roles in adaptation to various stress conditions and in DNA damage tolerance. This chain is Thiamine thiazole synthase, found in Aspergillus oryzae (strain ATCC 42149 / RIB 40) (Yellow koji mold).